Reading from the N-terminus, the 538-residue chain is Phosphoenolpyruvate carboxykinase (ATP) (538 aa).

Substrate-binding residues include arginine 64, tyrosine 205, and lysine 211. ATP is bound by residues lysine 211, histidine 230, and 246 to 254 (GLSGTGKTT). The Mn(2+) site is built by lysine 211 and histidine 230. Aspartate 267 serves as a coordination point for Mn(2+). Residues glutamate 295, arginine 331, 447–448 (RI), and threonine 453 contribute to the ATP site. A substrate-binding site is contributed by arginine 331.

Belongs to the phosphoenolpyruvate carboxykinase (ATP) family. Monomer. The cofactor is Mn(2+).

Its subcellular location is the cytoplasm. It catalyses the reaction oxaloacetate + ATP = phosphoenolpyruvate + ADP + CO2. It participates in carbohydrate biosynthesis; gluconeogenesis. In terms of biological role, involved in the gluconeogenesis. Catalyzes the conversion of oxaloacetate (OAA) to phosphoenolpyruvate (PEP) through direct phosphoryl transfer between the nucleoside triphosphate and OAA. This Baumannia cicadellinicola subsp. Homalodisca coagulata protein is Phosphoenolpyruvate carboxykinase (ATP).